We begin with the raw amino-acid sequence, 151 residues long: Large ribosomal subunit protein uL13 (151 aa).

This sequence belongs to the universal ribosomal protein uL13 family. Part of the 50S ribosomal subunit.

This protein is one of the early assembly proteins of the 50S ribosomal subunit, although it is not seen to bind rRNA by itself. It is important during the early stages of 50S assembly. The sequence is that of Large ribosomal subunit protein uL13 from Synechocystis sp. (strain ATCC 27184 / PCC 6803 / Kazusa).